Reading from the N-terminus, the 242-residue chain is Uridylate kinase (242 aa).

An ATP-binding site is contributed by 16–19 (KVSG). Position 58 (Gly58) interacts with UMP. ATP contacts are provided by Gly59 and Arg63. Residues Asp78 and 139–146 (TGNPFCTT) each bind UMP. Positions 166, 167, 172, and 175 each coordinate ATP.

Belongs to the UMP kinase family. In terms of assembly, homohexamer.

It is found in the cytoplasm. It carries out the reaction UMP + ATP = UDP + ADP. It participates in pyrimidine metabolism; CTP biosynthesis via de novo pathway; UDP from UMP (UMPK route): step 1/1. Inhibited by UTP. Functionally, catalyzes the reversible phosphorylation of UMP to UDP. This Rickettsia felis (strain ATCC VR-1525 / URRWXCal2) (Rickettsia azadi) protein is Uridylate kinase.